Reading from the N-terminus, the 213-residue chain is MSSVSILDYGVGNLLSVARAFQYFDASVNLVSTPEEIMSADRLVLPGVGAFEDGMKGLTTLNFIEPIKQFARSGKPFLGICLGMQMMLSKSTEFGQHEGLGLIAGEVVSVPSHGVDGQLHKIPHIGWNELVSTSEGEDWCHTILKNIPLNSSVYFVHSFMAMPSNPKKRLADTLYDGQAISAVIKDENMYGCQFHPEKSGEVGLSIIQQFLQI.

In terms of domain architecture, Glutamine amidotransferase type-1 spans 3–213 (SVSILDYGVG…LSIIQQFLQI (211 aa)). The active-site Nucleophile is Cys81. Residues His195 and Glu197 contribute to the active site.

In terms of assembly, heterodimer of HisH and HisF.

It is found in the cytoplasm. It carries out the reaction 5-[(5-phospho-1-deoxy-D-ribulos-1-ylimino)methylamino]-1-(5-phospho-beta-D-ribosyl)imidazole-4-carboxamide + L-glutamine = D-erythro-1-(imidazol-4-yl)glycerol 3-phosphate + 5-amino-1-(5-phospho-beta-D-ribosyl)imidazole-4-carboxamide + L-glutamate + H(+). The enzyme catalyses L-glutamine + H2O = L-glutamate + NH4(+). The protein operates within amino-acid biosynthesis; L-histidine biosynthesis; L-histidine from 5-phospho-alpha-D-ribose 1-diphosphate: step 5/9. In terms of biological role, IGPS catalyzes the conversion of PRFAR and glutamine to IGP, AICAR and glutamate. The HisH subunit provides the glutamine amidotransferase activity that produces the ammonia necessary to HisF for the synthesis of IGP and AICAR. This is Imidazole glycerol phosphate synthase subunit HisH 1 from Legionella pneumophila (strain Lens).